The chain runs to 23 residues: Hemocyanin subunit 4 (23 aa).

It belongs to the tyrosinase family. Hemocyanin subfamily. In terms of tissue distribution, hemolymph.

It is found in the secreted. It localises to the extracellular space. Its function is as follows. Hemocyanins are copper-containing oxygen carriers occurring freely dissolved in the hemolymph of many mollusks and arthropods. The sequence is that of Hemocyanin subunit 4 from Carcinus maenas (Common shore crab).